Here is a 253-residue protein sequence, read N- to C-terminus: Glucosamine-6-phosphate deaminase (253 aa).

The Proton acceptor; for enolization step role is filled by Asp65. Asn133 (for ring-opening step) is an active-site residue. His135 acts as the Proton acceptor; for ring-opening step in catalysis. Catalysis depends on Glu140, which acts as the For ring-opening step.

Belongs to the glucosamine/galactosamine-6-phosphate isomerase family. NagB subfamily.

It carries out the reaction alpha-D-glucosamine 6-phosphate + H2O = beta-D-fructose 6-phosphate + NH4(+). It participates in amino-sugar metabolism; N-acetylneuraminate degradation; D-fructose 6-phosphate from N-acetylneuraminate: step 5/5. In terms of biological role, catalyzes the reversible isomerization-deamination of glucosamine 6-phosphate (GlcN6P) to form fructose 6-phosphate (Fru6P) and ammonium ion. In Corynebacterium efficiens (strain DSM 44549 / YS-314 / AJ 12310 / JCM 11189 / NBRC 100395), this protein is Glucosamine-6-phosphate deaminase.